Reading from the N-terminus, the 201-residue chain is Fas apoptotic inhibitory molecule 1 (201 aa).

It belongs to the FAIM1 family.

It localises to the cytoplasm. Plays a role as an inducible effector molecule that mediates Fas resistance produced by surface Ig engagement in B cells. The sequence is that of Fas apoptotic inhibitory molecule 1 (FAIM) from Bos taurus (Bovine).